We begin with the raw amino-acid sequence, 2389 residues long: Highly reducing polyketide synthase Dhc3 (2389 aa).

Positions 9 to 433 constitute a Ketosynthase family 3 (KS3) domain; sequence DVPIAVVGLA…GTNGHAVLES (425 aa). Active-site for beta-ketoacyl synthase activity residues include Cys-181, His-316, and His-356. The segment at 551–861 is malonyl-CoA:ACP transacylase (MAT) domain; it reads FVFTGQGAQW…LSGPVEQILN (311 aa). The active-site For malonyltransferase activity is Ser-641. The segment at 944–1079 is N-terminal hotdog fold; the sequence is RSLIGAQVPM…GLITIDYADT (136 aa). Residues 944–1263 form the PKS/mFAS DH domain; sequence RSLIGAQVPM…VSELENDTEA (320 aa). Residues 946–1262 are dehydratase (DH) domain; the sequence is LIGAQVPMMD…RVSELENDTE (317 aa). His-976 acts as the Proton acceptor; for dehydratase activity in catalysis. Residues 1107–1263 are C-terminal hotdog fold; it reads PDICSKEDFY…VSELENDTEA (157 aa). Residue Asp-1173 is the Proton donor; for dehydratase activity of the active site. Residues 1673–1987 form an enoylreductase (ER) domain region; the sequence is GLLDTLAFIE…QGKHRGKLVL (315 aa). Residues 2011-2191 are catalytic ketoreductase (KRc) domain; sequence ATYLFVGGLG…VAVDLGIMRD (181 aa). Residues 2302–2379 enclose the Carrier domain; sequence EAVSIITDAL…EFAEKIAEKS (78 aa). The residue at position 2339 (Ser-2339) is an O-(pantetheine 4'-phosphoryl)serine.

It functions in the pathway mycotoxin biosynthesis. Highly reducing polyketide synthase; part of the gene cluster that mediates the biosynthesis of 10,11-dehydrocurvularin, a prevalent fungal phytotoxin with heat shock response and immune-modulatory activities. The highly reducing polyketide synthase Dhc3 is responsible for biosynthesis up to the tetraketide stage. The non-reducing polyketide synthase Dhc5 then conducts four additional chain extension cycles, producing the unreduced part of the nascent octaketide from C-1 to C-8 in 10,11-dehydrocurvularin. The chain is Highly reducing polyketide synthase Dhc3 (Dhc3) from Alternaria cinerariae.